Consider the following 282-residue polypeptide: Orotidine 5'-phosphate decarboxylase (282 aa).

The active-site Proton donor is the K95.

Belongs to the OMP decarboxylase family. Type 2 subfamily.

It carries out the reaction orotidine 5'-phosphate + H(+) = UMP + CO2. It functions in the pathway pyrimidine metabolism; UMP biosynthesis via de novo pathway; UMP from orotate: step 2/2. The sequence is that of Orotidine 5'-phosphate decarboxylase from Polaromonas naphthalenivorans (strain CJ2).